The sequence spans 66 residues: MFTLKKSMLLLFFLGTINLSLCQEERDAEEERRDEDNAKMEEIKRGILGTVFKAGKGIVCGLTGLC.

The signal sequence occupies residues 1–22; the sequence is MFTLKKSMLLLFFLGTINLSLC. A propeptide spans 23 to 43 (removed in mature form); sequence QEERDAEEERRDEDNAKMEEI. The cysteines at positions 60 and 66 are disulfide-linked.

As to expression, expressed by the skin glands.

It is found in the secreted. Functionally, has antimicrobial activity against Gram-negative bacterium E.coli ATCC 8739 (MIC=50 ug), against Gram positive bacteria S.aureus ATCC 6538 (MIC=3.1 ug), methicillin-resistant S.aureus ATCC 43300 (MIC=12.5 ug), B.subtilis ATCC 6633 (MIC=12.5 ug) and against fungus C.albicans ATCC 90028 (MIC=50 ug). This Odorrana ishikawae (Ishikawa's frog) protein is Nigrocin-2ISb.